The following is a 259-amino-acid chain: Transmembrane protein 81 (259 aa).

The first 18 residues, 1–18 (MALSTLWLVLMLWTSLFS), serve as a signal peptide directing secretion. The Extracellular portion of the chain corresponds to 19–221 (DSQCSTLSQA…KVYSSSTIRN (203 aa)). An Ig-like domain is found at 97–172 (GRRLVLDCLE…VLDTGKRRVK (76 aa)). Cys104 and Cys161 are disulfide-bonded. Residues 222 to 242 (IVIISVPLSFAIAVVIFIFLF) traverse the membrane as a helical segment. Residues 243-259 (CYSRRARRAAHLCQDNI) lie on the Cytoplasmic side of the membrane.

Forms a complex with izumo1 and spaca6 on spermatocyte cell membrane. The complex binds to oocyte protein bncr. Expressed in sperm.

The protein resides in the cell membrane. Essential fertilization factor required for male fertility. Part of a conserved trimeric sperm complex with the essential fertilization factors IZUMO1 and SPACA6 which bridges sperm and oocyte membranes during fertilization by binding to IZUMO1R/JUNO on the oocyte. The chain is Transmembrane protein 81 from Danio rerio (Zebrafish).